The primary structure comprises 406 residues: UPF0754 membrane protein SYNPCC7002_A1087 (406 aa).

The chain crosses the membrane as a helical span at residues 384 to 404; sequence IVNLGGVLGFLVGVAQSVILL.

Belongs to the UPF0754 family.

The protein resides in the cell inner membrane. The chain is UPF0754 membrane protein SYNPCC7002_A1087 from Picosynechococcus sp. (strain ATCC 27264 / PCC 7002 / PR-6) (Agmenellum quadruplicatum).